A 95-amino-acid chain; its full sequence is Small ribosomal subunit protein bS21 (95 aa).

The segment at 56 to 95 is disordered; sequence KLARKKMQREGLLPMKPKPVFGAGPGAGRGGPAAGPRGPR. The span at 78–88 shows a compositional bias: gly residues; it reads AGPGAGRGGPA.

It belongs to the bacterial ribosomal protein bS21 family.

This Nitrobacter winogradskyi (strain ATCC 25391 / DSM 10237 / CIP 104748 / NCIMB 11846 / Nb-255) protein is Small ribosomal subunit protein bS21.